Reading from the N-terminus, the 50-residue chain is PhoP/PhoQ regulator MgrB (50 aa).

Residues 1 to 4 (MLDL) lie on the Cytoplasmic side of the membrane. The chain crosses the membrane as a helical span at residues 5 to 27 (NITKLVTTVVIIAACCLFYLLAL). The Periplasmic segment spans residues 28–50 (DSYCDQGGTFSTGICAITTIVPW).

The protein belongs to the MgrB family. As to quaternary structure, probably interacts with the periplasmic domain of PhoQ.

Its subcellular location is the cell inner membrane. In terms of biological role, phoP-regulated transcription is redox-sensitive, being activated when the periplasm becomes more reducing. MgrB acts between DsbA/DsbB and PhoP/PhoQ in this pathway. Represses PhoP/PhoQ signaling, possibly by binding to the periplasmic domain of PhoQ, altering its activity and that of downstream effector PhoP. The sequence is that of PhoP/PhoQ regulator MgrB from Yersinia pestis.